Consider the following 37-residue polypeptide: Small ribosomal subunit protein eS32 (37 aa).

It belongs to the eukaryotic ribosomal protein eS32 family. In terms of assembly, part of the small ribosomal subunit.

In terms of biological role, interacts with N(4)-acetylcytidine (ac(4)C) 1459 of the small rRNA; the acetyl group of ac(4)C1459 briges the interaction with this protein. This chain is Small ribosomal subunit protein eS32 (rpl41e), found in Thermococcus kodakarensis (strain ATCC BAA-918 / JCM 12380 / KOD1) (Pyrococcus kodakaraensis (strain KOD1)).